The following is a 308-amino-acid chain: UPF0282 protein PYRAB09800 (308 aa).

Belongs to the UPF0282 family.

In Pyrococcus abyssi (strain GE5 / Orsay), this protein is UPF0282 protein PYRAB09800.